The chain runs to 170 residues: MRLQGAIFVLLPHLGPILVWLFTRDHMSGWCEGPRMLSWCPFYKVLLLVQTAIYSVVGYASYLVWKDLGGGLGWPLALPLGLYAVQLTISWTVLVLFFTVHNPGLALLHLLLLYGLVVSTALIWHPINKLAALLLLPYLAWLTVTSALTYHLWRDSLCPVHQPQPTEKSD.

5 helical membrane passes run 3–23 (LQGA…WLFT), 45–65 (VLLL…YLVW), 78–98 (LPLG…VLFF), 104–124 (GLAL…ALIW), and 130–150 (LAAL…ALTY).

This sequence belongs to the TspO/BZRP family. In terms of assembly, homotetramer. May also form homodimer. As to expression, expressed in erythrocytes (at protein level).

Its subcellular location is the endoplasmic reticulum membrane. The protein resides in the cell membrane. Cholesterol-binding protein involved in the redistribution of cholesterol from lipid droplets to the endoplasmic reticulum. Required to meet cholesterol demands during erythropoietic differentiation. May play a role in transport processes at the plasma membrane of erythrocytes, including regulating VDAC-mediated ATP export, and import of the heme precursors protoporphyrin IX and 5-aminolevulinic acid. This chain is Translocator protein 2 (TSPO2), found in Homo sapiens (Human).